The chain runs to 428 residues: Light-independent protochlorophyllide reductase subunit N (428 aa).

Cys-30, Cys-55, and Cys-116 together coordinate [4Fe-4S] cluster.

This sequence belongs to the BchN/ChlN family. Protochlorophyllide reductase is composed of three subunits; BchL, BchN and BchB. Forms a heterotetramer of two BchB and two BchN subunits. [4Fe-4S] cluster serves as cofactor.

The enzyme catalyses chlorophyllide a + oxidized 2[4Fe-4S]-[ferredoxin] + 2 ADP + 2 phosphate = protochlorophyllide a + reduced 2[4Fe-4S]-[ferredoxin] + 2 ATP + 2 H2O. It functions in the pathway porphyrin-containing compound metabolism; bacteriochlorophyll biosynthesis (light-independent). In terms of biological role, component of the dark-operative protochlorophyllide reductase (DPOR) that uses Mg-ATP and reduced ferredoxin to reduce ring D of protochlorophyllide (Pchlide) to form chlorophyllide a (Chlide). This reaction is light-independent. The NB-protein (BchN-BchB) is the catalytic component of the complex. The chain is Light-independent protochlorophyllide reductase subunit N from Bradyrhizobium sp. (strain BTAi1 / ATCC BAA-1182).